The following is a 252-amino-acid chain: 5-oxoprolinase subunit A (252 aa).

Belongs to the LamB/PxpA family. As to quaternary structure, forms a complex composed of PxpA, PxpB and PxpC.

It catalyses the reaction 5-oxo-L-proline + ATP + 2 H2O = L-glutamate + ADP + phosphate + H(+). Its function is as follows. Catalyzes the cleavage of 5-oxoproline to form L-glutamate coupled to the hydrolysis of ATP to ADP and inorganic phosphate. The polypeptide is 5-oxoprolinase subunit A (Corynebacterium glutamicum (strain R)).